The primary structure comprises 249 residues: Proteasome subunit alpha type-7 (249 aa).

This sequence belongs to the peptidase T1A family. In terms of assembly, the 26S proteasome consists of a 20S proteasome core and two 19S regulatory subunits. The 20S proteasome core is composed of 28 subunits that are arranged in four stacked rings, resulting in a barrel-shaped structure. The two end rings are each formed by seven alpha subunits, and the two central rings are each formed by seven beta subunits. The catalytic chamber with the active sites is on the inside of the barrel.

It localises to the cytoplasm. The protein resides in the nucleus. Its function is as follows. The proteasome is a multicatalytic proteinase complex which is characterized by its ability to cleave peptides with Arg, Phe, Tyr, Leu, and Glu adjacent to the leaving group at neutral or slightly basic pH. The proteasome has an ATP-dependent proteolytic activity. The sequence is that of Proteasome subunit alpha type-7 (PAD1) from Cicer arietinum (Chickpea).